We begin with the raw amino-acid sequence, 201 residues long: Holliday junction branch migration complex subunit RuvA (201 aa).

The segment at 1–64 is domain I; that stretch reads MIGRLHGKII…EDAHLLFGFA (64 aa). The segment at 65 to 143 is domain II; sequence QKQDRTLFRE…GVAQSDFFEE (79 aa). Positions 144–154 are flexible linker; sequence HSVETIVATHS. The domain III stretch occupies residues 154 to 201; it reads SHDPADEARDALVALGYKLADAEKMIKKVNKAGATSEQLIREALKASL.

Belongs to the RuvA family. Homotetramer. Forms an RuvA(8)-RuvB(12)-Holliday junction (HJ) complex. HJ DNA is sandwiched between 2 RuvA tetramers; dsDNA enters through RuvA and exits via RuvB. An RuvB hexamer assembles on each DNA strand where it exits the tetramer. Each RuvB hexamer is contacted by two RuvA subunits (via domain III) on 2 adjacent RuvB subunits; this complex drives branch migration. In the full resolvosome a probable DNA-RuvA(4)-RuvB(12)-RuvC(2) complex forms which resolves the HJ.

The protein resides in the cytoplasm. In terms of biological role, the RuvA-RuvB-RuvC complex processes Holliday junction (HJ) DNA during genetic recombination and DNA repair, while the RuvA-RuvB complex plays an important role in the rescue of blocked DNA replication forks via replication fork reversal (RFR). RuvA specifically binds to HJ cruciform DNA, conferring on it an open structure. The RuvB hexamer acts as an ATP-dependent pump, pulling dsDNA into and through the RuvAB complex. HJ branch migration allows RuvC to scan DNA until it finds its consensus sequence, where it cleaves and resolves the cruciform DNA. This is Holliday junction branch migration complex subunit RuvA from Actinobacillus pleuropneumoniae serotype 7 (strain AP76).